The following is a 123-amino-acid chain: UPF0102 protein PSHAa2523 (123 aa).

It belongs to the UPF0102 family.

The protein is UPF0102 protein PSHAa2523 of Pseudoalteromonas translucida (strain TAC 125).